Reading from the N-terminus, the 399-residue chain is Acetate kinase (399 aa).

Asn-7 serves as a coordination point for Mg(2+). Lys-14 lines the ATP pocket. Arg-91 is a substrate binding site. The active-site Proton donor/acceptor is Asp-148. Residues 208–212 (HIGNG), 283–285 (DMR), and 331–335 (GVGEN) contribute to the ATP site. Mg(2+) is bound at residue Glu-385.

It belongs to the acetokinase family. In terms of assembly, homodimer. Requires Mg(2+) as cofactor. Mn(2+) serves as cofactor.

The protein resides in the cytoplasm. The catalysed reaction is acetate + ATP = acetyl phosphate + ADP. It participates in metabolic intermediate biosynthesis; acetyl-CoA biosynthesis; acetyl-CoA from acetate: step 1/2. Its function is as follows. Catalyzes the formation of acetyl phosphate from acetate and ATP. Can also catalyze the reverse reaction. The sequence is that of Acetate kinase from Bacteroides thetaiotaomicron (strain ATCC 29148 / DSM 2079 / JCM 5827 / CCUG 10774 / NCTC 10582 / VPI-5482 / E50).